A 162-amino-acid chain; its full sequence is Regulatory protein RecX (162 aa).

It belongs to the RecX family.

It is found in the cytoplasm. In terms of biological role, modulates RecA activity. The protein is Regulatory protein RecX of Xanthomonas campestris pv. campestris (strain 8004).